Reading from the N-terminus, the 243-residue chain is tRNA (guanine-N(1)-)-methyltransferase (243 aa).

Residues G108 and 127–132 (LGDFVL) each bind S-adenosyl-L-methionine.

The protein belongs to the RNA methyltransferase TrmD family. In terms of assembly, homodimer.

It is found in the cytoplasm. It carries out the reaction guanosine(37) in tRNA + S-adenosyl-L-methionine = N(1)-methylguanosine(37) in tRNA + S-adenosyl-L-homocysteine + H(+). Specifically methylates guanosine-37 in various tRNAs. The polypeptide is tRNA (guanine-N(1)-)-methyltransferase (Streptococcus equi subsp. zooepidemicus (strain MGCS10565)).